We begin with the raw amino-acid sequence, 76 residues long: Large ribosomal subunit protein eL20 (76 aa).

The protein belongs to the eukaryotic ribosomal protein eL20 family. Part of the 50S ribosomal subunit. Binds 23S rRNA.

In Methanocaldococcus jannaschii (strain ATCC 43067 / DSM 2661 / JAL-1 / JCM 10045 / NBRC 100440) (Methanococcus jannaschii), this protein is Large ribosomal subunit protein eL20.